A 930-amino-acid polypeptide reads, in one-letter code: Isoleucine--tRNA ligase (930 aa).

Positions 57–67 (PYANGNIHVGH) match the 'HIGH' region motif. Glutamate 554 contributes to the L-isoleucyl-5'-AMP binding site. Residues 595–599 (KMSKS) carry the 'KMSKS' region motif. Residue lysine 598 participates in ATP binding. Zn(2+) is bound by residues cysteine 888, cysteine 891, cysteine 908, and cysteine 911.

It belongs to the class-I aminoacyl-tRNA synthetase family. IleS type 1 subfamily. As to quaternary structure, monomer. Requires Zn(2+) as cofactor.

Its subcellular location is the cytoplasm. It catalyses the reaction tRNA(Ile) + L-isoleucine + ATP = L-isoleucyl-tRNA(Ile) + AMP + diphosphate. Catalyzes the attachment of isoleucine to tRNA(Ile). As IleRS can inadvertently accommodate and process structurally similar amino acids such as valine, to avoid such errors it has two additional distinct tRNA(Ile)-dependent editing activities. One activity is designated as 'pretransfer' editing and involves the hydrolysis of activated Val-AMP. The other activity is designated 'posttransfer' editing and involves deacylation of mischarged Val-tRNA(Ile). This Streptococcus pneumoniae (strain ATCC 700669 / Spain 23F-1) protein is Isoleucine--tRNA ligase.